The primary structure comprises 266 residues: Type II iodothyronine deiodinase (266 aa).

Topologically, residues methionine 1–glutamine 13 are lumenal. The chain crosses the membrane as a helical; Signal-anchor for type III membrane protein span at residues isoleucine 14–valine 34. At lysine 35 to arginine 266 the chain is on the cytoplasmic side. Selenocysteine 134 is a catalytic residue. Position 134 (selenocysteine 134) is a non-standard amino acid, selenocysteine.

It belongs to the iodothyronine deiodinase family. As to quaternary structure, predominantly monomer. Can form homodimers but homodimerization is not essential for enzyme activity.

The protein resides in the endoplasmic reticulum membrane. The enzyme catalyses 3,3',5-triiodo-L-thyronine + iodide + A + H(+) = L-thyroxine + AH2. The catalysed reaction is 3,3'-diiodo-L-thyronine + iodide + A + H(+) = 3,3',5'-triiodo-L-thyronine + AH2. It catalyses the reaction 3'-iodo-L-thyronine + iodide + A + H(+) = 3',5'-diiodo-L-thyronine + AH2. With respect to regulation, not inhibited by N(6)-propylthiouracil. Functionally, plays a crucial role in the metabolism of thyroid hormones (TH) and has specific roles in TH activation and inactivation by deiodination. Catalyzes the conversion of T4 (L-thyroxine/3,5,3',5'-tetraiodothyronine) to T3 (3,5,3'-triiodothyronine) and rT3 (3,3',5'-triiodothyronine) to T2 (3,3'-diiodothyronine) via outer-ring deiodination (ORD). Catalyzes the conversion 3',5'-T2 (3,5-diiodothyronine) to 3-T1 (3-monoiodothyronine) via ORD. The sequence is that of Type II iodothyronine deiodinase (dio2) from Fundulus heteroclitus (Killifish).